We begin with the raw amino-acid sequence, 396 residues long: Putative nickel insertion protein (396 aa).

The protein belongs to the LarC family.

The sequence is that of Putative nickel insertion protein from Methanosarcina mazei (strain ATCC BAA-159 / DSM 3647 / Goe1 / Go1 / JCM 11833 / OCM 88) (Methanosarcina frisia).